The primary structure comprises 694 residues: Polynucleotide 3'-phosphatase ZDP (694 aa).

2 consecutive PARP-type zinc fingers follow at residues 50–132 (VVAE…EQCG) and 165–247 (VIAD…EVNK). Cys-62, Cys-65, His-93, Cys-96, Cys-177, Cys-180, His-208, and Cys-211 together coordinate Zn(2+). A disordered region spans residues 266–331 (AIADNELTEE…SPDSSKVISE (66 aa)). The span at 302–321 (ESKKPASDEISEQKTKDVKN) shows a compositional bias: basic and acidic residues. Residues 322–331 (SPDSSKVISE) are compositionally biased toward polar residues. The PARP-type 3 zinc-finger motif lies at 328–410 (VISEYAKSSR…ALKELVQQCG (83 aa)). Zn(2+) is bound by residues Cys-340, Cys-343, His-371, and Cys-374.

In the C-terminal section; belongs to the DNA 3' phosphatase family. In terms of assembly, interacts with ROS1 (via the central region). Binds to XRCC1.

It localises to the nucleus. The protein localises to the nucleoplasm. The enzyme catalyses a 3'end (2'-deoxyribonucleotide 3'-phosphate)-DNA + H2O = a 3'-end 2'-deoxyribonucleotide-DNA + phosphate. Its activity is regulated as follows. Activated by the presence of DNA. Stimulated by XRCC1. Its function is as follows. Nick-sensing 3'-phosphoesterase involved in a base excision repair pathway required for active DNA demethylation. The N-terminal DNA-binding domain binds specifically to gap sites and sharply bends the target DNA. Lacks 5'-kinase activity but is capable of 3'-phosphoglycolate end processing. Inactive on 3'-alpha,beta-unsaturated aldehyde (3'-dRP). Protects partially genes from transcriptional silencing by preventing promoter DNA hypermethylation. This Arabidopsis thaliana (Mouse-ear cress) protein is Polynucleotide 3'-phosphatase ZDP (ZDP).